The sequence spans 240 residues: Large ribosomal subunit protein uL2 (240 aa).

Residues 1–11 (MGKRLISQNRG) show a composition bias toward polar residues. Disordered regions lie at residues 1-31 (MGKR…VKYR) and 206-240 (GGGR…TGRK). Basic residues-rich tracts occupy residues 13–28 (GTPK…KGAV) and 224–240 (SPGR…TGRK).

Belongs to the universal ribosomal protein uL2 family. As to quaternary structure, part of the 50S ribosomal subunit. Forms a bridge to the 30S subunit in the 70S ribosome.

One of the primary rRNA binding proteins. Required for association of the 30S and 50S subunits to form the 70S ribosome, for tRNA binding and peptide bond formation. It has been suggested to have peptidyltransferase activity; this is somewhat controversial. Makes several contacts with the 16S rRNA in the 70S ribosome. This is Large ribosomal subunit protein uL2 from Methanococcus maripaludis (strain C6 / ATCC BAA-1332).